A 169-amino-acid polypeptide reads, in one-letter code: Nucleoside diphosphate kinase 3-A (169 aa).

K29, R105, T111, R122, V129, and N132 together coordinate ADP. The Pros-phosphohistidine intermediate role is filled by H135.

It belongs to the NDK family. Homohexamer. It depends on Mg(2+) as a cofactor.

Its subcellular location is the mitochondrion outer membrane. The protein localises to the cytoplasm. It is found in the cytoskeleton. It localises to the cilium basal body. The enzyme catalyses a 2'-deoxyribonucleoside 5'-diphosphate + ATP = a 2'-deoxyribonucleoside 5'-triphosphate + ADP. It carries out the reaction a ribonucleoside 5'-diphosphate + ATP = a ribonucleoside 5'-triphosphate + ADP. Functionally, catalyzes the phosphorylation of ribonucleosides and deoxyribonucleoside diphosphates, other than ATP, into the corresponding triphosphates with ATP as the major phosphate donor. The ATP gamma phosphate is transferred to the nucleoside diphosphate beta phosphate via a ping-pong mechanism, using a phosphorylated active-site intermediate. Through the catalyzed exchange of gamma-phosphate between di- and triphosphonucleosides participates in regulation of intracellular nucleotide homeostasis. Required for ciliary function during renal development. Independently of its kinase activity, facilitates mitochondrial tethering prior to membrane fusion through its direct membrane-binding and hexamerization. Implicated in repair of both single- and double-stranded breaks in DNA, independently of its kinase activity. This is Nucleoside diphosphate kinase 3-A from Xenopus laevis (African clawed frog).